A 179-amino-acid polypeptide reads, in one-letter code: Adenine phosphoribosyltransferase (179 aa).

It belongs to the purine/pyrimidine phosphoribosyltransferase family. Homodimer.

Its subcellular location is the cytoplasm. It catalyses the reaction AMP + diphosphate = 5-phospho-alpha-D-ribose 1-diphosphate + adenine. Its pathway is purine metabolism; AMP biosynthesis via salvage pathway; AMP from adenine: step 1/1. Its function is as follows. Catalyzes a salvage reaction resulting in the formation of AMP, that is energically less costly than de novo synthesis. The polypeptide is Adenine phosphoribosyltransferase (Dinoroseobacter shibae (strain DSM 16493 / NCIMB 14021 / DFL 12)).